The sequence spans 222 residues: Zinc finger C2HC domain-containing protein 1B (222 aa).

A C2HC/C3H-type 1 zinc finger spans residues 14 to 43; sequence ELFPCEVCGRRFAADVLERHGPICKKLFNR. Zn(2+) contacts are provided by C18, C21, H33, and C37. Residues 48–78 are disordered; sequence FSSLKQRLQGTDIPTVKKTPQSKSPPVRKSN. A C2HC/C3H-type 2; degenerate zinc finger spans residues 117–146; the sequence is DYIQRPYCMRRFNESAAERHTNFCKDQSSR. The disordered stretch occupies residues 196–222; that stretch reads PTKSGLAMDPASGAKLRQGFSKSSKKD.

The protein belongs to the ZC2HC1 family. The cofactor is Zn(2+).

This is Zinc finger C2HC domain-containing protein 1B (ZC2HC1B) from Homo sapiens (Human).